Here is a 534-residue protein sequence, read N- to C-terminus: Glycolytic genes transcriptional activator GCR2 (534 aa).

Residues 29–122 (LQSVTNSPQT…TGNNASSSAT (94 aa)) form a disordered region. The segment covering 30–43 (QSVTNSPQTTTNTP) has biased composition (low complexity). The span at 64-88 (SDSTPNIDEIITSTGSNALTKTNSD) shows a compositional bias: polar residues. Positions 89 to 122 (SANGTPNGNSSSTSAISNASNPATTGNNASSSAT) are enriched in low complexity. The residue at position 151 (Ser151) is a Phosphoserine. A disordered region spans residues 230 to 333 (LTQGRRKGNS…SNPGTNMLFD (104 aa)). A compositionally biased stretch (polar residues) spans 238–252 (NSLNTSTKGSPSDLQ). The span at 253–279 (GINNGNNNGNNGNIGNGSNIKNYGNKN) shows a compositional bias: low complexity. The short motif at 281–288 (PNNRTKKR) is the Nuclear localization signal element. Residues 295 to 304 (NAKNGKNNKN) are compositionally biased toward low complexity. Polar residues predominate over residues 312–328 (ITDTSAFSNTTISNPGT). Ser406 and Ser409 each carry phosphoserine. The tract at residues 497–534 (IVQLERELELQRQETQWLRKMLIEDMGCVRSMLRDLQR) is leucine-zipper.

As to quaternary structure, homodimer via the leucine-zipper domain. Forms a complex with a GCR1 homodimer.

The protein resides in the nucleus. Its function is as follows. Transcriptional activator required for the expression of glycolytic genes. Enhances the CT box-dependent transcriptional activation of a RAP1-GCR1 complex. Required for GCR1 phosphorylation. This chain is Glycolytic genes transcriptional activator GCR2 (GCR2), found in Saccharomyces cerevisiae (strain ATCC 204508 / S288c) (Baker's yeast).